Here is a 129-residue protein sequence, read N- to C-terminus: Glycine cleavage system H protein (129 aa).

A Lipoyl-binding domain is found at threonine 24–lysine 106. Position 65 is an N6-lipoyllysine (lysine 65).

This sequence belongs to the GcvH family. As to quaternary structure, the glycine cleavage system is composed of four proteins: P, T, L and H. It depends on (R)-lipoate as a cofactor.

Its function is as follows. The glycine cleavage system catalyzes the degradation of glycine. The H protein shuttles the methylamine group of glycine from the P protein to the T protein. The protein is Glycine cleavage system H protein of Klebsiella pneumoniae subsp. pneumoniae (strain ATCC 700721 / MGH 78578).